A 523-amino-acid polypeptide reads, in one-letter code: 2-isopropylmalate synthase (523 aa).

Residues 5–267 (VIIFDTTLRD…ETGINAKEIH (263 aa)) form the Pyruvate carboxyltransferase domain. Residues Asp-14, His-202, His-204, and Asn-238 each coordinate Mn(2+). Residues 392–523 (KLAQLVVHSD…QKDRSELGGV (132 aa)) are regulatory domain.

It belongs to the alpha-IPM synthase/homocitrate synthase family. LeuA type 1 subfamily. In terms of assembly, homodimer. Requires Mn(2+) as cofactor.

The protein localises to the cytoplasm. It catalyses the reaction 3-methyl-2-oxobutanoate + acetyl-CoA + H2O = (2S)-2-isopropylmalate + CoA + H(+). It functions in the pathway amino-acid biosynthesis; L-leucine biosynthesis; L-leucine from 3-methyl-2-oxobutanoate: step 1/4. Functionally, catalyzes the condensation of the acetyl group of acetyl-CoA with 3-methyl-2-oxobutanoate (2-ketoisovalerate) to form 3-carboxy-3-hydroxy-4-methylpentanoate (2-isopropylmalate). This chain is 2-isopropylmalate synthase, found in Shewanella sediminis (strain HAW-EB3).